The sequence spans 461 residues: Kynurenine 3-monooxygenase (461 aa).

Helical transmembrane passes span G395–T415 and I432–I452.

The protein belongs to the aromatic-ring hydroxylase family. KMO subfamily. FAD is required as a cofactor.

Its subcellular location is the mitochondrion. It localises to the membrane. It catalyses the reaction L-kynurenine + NADPH + O2 + H(+) = 3-hydroxy-L-kynurenine + NADP(+) + H2O. The protein operates within cofactor biosynthesis; NAD(+) biosynthesis; quinolinate from L-kynurenine: step 1/3. Its function is as follows. Catalyzes the hydroxylation of L-kynurenine (L-Kyn) to form 3-hydroxy-L-kynurenine (L-3OHKyn). Required for synthesis of quinolinic acid. This Caenorhabditis briggsae protein is Kynurenine 3-monooxygenase.